Consider the following 226-residue polypeptide: ATP synthase subunit C lysine N-methyltransferase (226 aa).

A helical membrane pass occupies residues 35–55 (VIGGTLVALYAVATPFVAPAL). A required for mitochondrial location region spans residues 48-82 (TPFVAPALRKLCLPYVPATTTQVKNVLKMLRSRTG).

The protein belongs to the ANT/ATPSC lysine N-methyltransferase family.

The protein resides in the mitochondrion membrane. Its function is as follows. Mitochondrial protein-lysine N-methyltransferase that promotes chronic pain. Involved in persistent inflammatory and neuropathic pain: methyltransferase activity in the mitochondria of sensory neurons promotes chronic pain via a pathway that depends on the production of reactive oxygen species (ROS) and on the engagement of spinal cord microglia. Protein-lysine N-methyltransferase activity is dependent on S-adenosyl-L-methionine. This chain is ATP synthase subunit C lysine N-methyltransferase (atpsckmt), found in Xenopus laevis (African clawed frog).